Consider the following 115-residue polypeptide: Nucleoid-associated protein PMN2A_1347 (115 aa).

The interval 89 to 115 is disordered; the sequence is STSTMKERMEDLTGGFKLNLPGMGEEN.

Belongs to the YbaB/EbfC family. As to quaternary structure, homodimer.

The protein resides in the cytoplasm. Its subcellular location is the nucleoid. Its function is as follows. Binds to DNA and alters its conformation. May be involved in regulation of gene expression, nucleoid organization and DNA protection. In Prochlorococcus marinus (strain NATL2A), this protein is Nucleoid-associated protein PMN2A_1347.